An 89-amino-acid chain; its full sequence is Small ribosomal subunit protein uS15 (89 aa).

Belongs to the universal ribosomal protein uS15 family. As to quaternary structure, part of the 30S ribosomal subunit. Forms a bridge to the 50S subunit in the 70S ribosome, contacting the 23S rRNA.

One of the primary rRNA binding proteins, it binds directly to 16S rRNA where it helps nucleate assembly of the platform of the 30S subunit by binding and bridging several RNA helices of the 16S rRNA. Functionally, forms an intersubunit bridge (bridge B4) with the 23S rRNA of the 50S subunit in the ribosome. In Maridesulfovibrio salexigens (strain ATCC 14822 / DSM 2638 / NCIMB 8403 / VKM B-1763) (Desulfovibrio salexigens), this protein is Small ribosomal subunit protein uS15.